The following is a 158-amino-acid chain: Protein NrdI (158 aa).

Belongs to the NrdI family.

Functionally, probably involved in ribonucleotide reductase function. The chain is Protein NrdI from Rhodococcus jostii (strain RHA1).